The primary structure comprises 407 residues: MKRVVITGFGIISSIGNNKKEVLNSLYNGISGITFSEEMKESGMRSQVWGNIKLENKKFFKKNKISRFMNNGSIYAFLSMEQAIKDANLQTKQYQKNPRIGIIAGSGGGFPKYHIQGIDAIRSNRGLNSVSPYIAIKAMNSGISACLSTLFKIYGVNYSISSACATSGHCIGNAFELIKFGKQDLIFAGGGEEVSWELAYEFDAMKALSSNFNKNPTKSSRVYDVNRDGFVISGGGGIIVIEELNCALSRSAHIYAEIIGYAATSDGKDMVVPSGDGAVRCMNLAKKQNKMLFIDYLNVHGTSTKIGDLIELEAIKKSFFHEKKPMISATKSMTGHALGVSGVHEIIYTLLMMKYNFIAPSINIETIEPSADNMNIVQKTFHKKIKTALSNSFGFGGTNVSLILKKY.

The Ketosynthase family 3 (KS3) domain occupies 1–406 (MKRVVITGFG…GTNVSLILKK (406 aa)). Residues cysteine 164, histidine 300, and histidine 336 each act as for beta-ketoacyl synthase activity in the active site.

This sequence belongs to the thiolase-like superfamily. Beta-ketoacyl-ACP synthases family. Homodimer.

It localises to the cytoplasm. The catalysed reaction is a fatty acyl-[ACP] + malonyl-[ACP] + H(+) = a 3-oxoacyl-[ACP] + holo-[ACP] + CO2. It catalyses the reaction (3Z)-decenoyl-[ACP] + malonyl-[ACP] + H(+) = 3-oxo-(5Z)-dodecenoyl-[ACP] + holo-[ACP] + CO2. Its pathway is lipid metabolism; fatty acid biosynthesis. Involved in the type II fatty acid elongation cycle. Catalyzes the elongation of a wide range of acyl-ACP by the addition of two carbons from malonyl-ACP to an acyl acceptor. Can also use unsaturated fatty acids. Catalyzes a key reaction in unsaturated fatty acid (UFA) synthesis, the elongation of the cis-3-decenoyl-ACP produced by FabA. The sequence is that of 3-oxoacyl-[acyl-carrier-protein] synthase 1 (fabB) from Buchnera aphidicola subsp. Schizaphis graminum (strain Sg).